Reading from the N-terminus, the 262-residue chain is Hydroxyethylthiazole kinase (262 aa).

Methionine 44 is a substrate binding site. ATP is bound by residues arginine 118 and threonine 166. Substrate is bound at residue glycine 193.

It belongs to the Thz kinase family. It depends on Mg(2+) as a cofactor.

The catalysed reaction is 5-(2-hydroxyethyl)-4-methylthiazole + ATP = 4-methyl-5-(2-phosphooxyethyl)-thiazole + ADP + H(+). The protein operates within cofactor biosynthesis; thiamine diphosphate biosynthesis; 4-methyl-5-(2-phosphoethyl)-thiazole from 5-(2-hydroxyethyl)-4-methylthiazole: step 1/1. Functionally, catalyzes the phosphorylation of the hydroxyl group of 4-methyl-5-beta-hydroxyethylthiazole (THZ). This is Hydroxyethylthiazole kinase from Chlamydia felis (strain Fe/C-56) (Chlamydophila felis).